We begin with the raw amino-acid sequence, 547 residues long: uncharacterized protein (547 aa).

This sequence to B.pertussis prn N-terminal region.

This is an uncharacterized protein from Escherichia coli O157:H7.